The sequence spans 417 residues: Serine hydroxymethyltransferase (417 aa).

Residues Leu121 and 125–127 (GHL) each bind (6S)-5,6,7,8-tetrahydrofolate. Lys229 bears the N6-(pyridoxal phosphate)lysine mark. 355–357 (SPF) contributes to the (6S)-5,6,7,8-tetrahydrofolate binding site.

This sequence belongs to the SHMT family. In terms of assembly, homodimer. Requires pyridoxal 5'-phosphate as cofactor.

Its subcellular location is the cytoplasm. The enzyme catalyses (6R)-5,10-methylene-5,6,7,8-tetrahydrofolate + glycine + H2O = (6S)-5,6,7,8-tetrahydrofolate + L-serine. It functions in the pathway one-carbon metabolism; tetrahydrofolate interconversion. The protein operates within amino-acid biosynthesis; glycine biosynthesis; glycine from L-serine: step 1/1. Catalyzes the reversible interconversion of serine and glycine with tetrahydrofolate (THF) serving as the one-carbon carrier. This reaction serves as the major source of one-carbon groups required for the biosynthesis of purines, thymidylate, methionine, and other important biomolecules. Also exhibits THF-independent aldolase activity toward beta-hydroxyamino acids, producing glycine and aldehydes, via a retro-aldol mechanism. This Aeromonas salmonicida (strain A449) protein is Serine hydroxymethyltransferase.